The following is a 314-amino-acid chain: Beta-lactamase (314 aa).

The segment at residues 1-39 (MHPSTSRPSRRTLLTATAGAALAAATLVPGTAHASSGGR) is a signal peptide (tat-type signal). The tract at residues 31 to 50 (TAHASSGGRGHGSGSVSDAE) is disordered. Catalysis depends on Ser-89, which acts as the Acyl-ester intermediate. 259-261 (KTG) is a binding site for substrate.

The protein belongs to the class-A beta-lactamase family. Predicted to be exported by the Tat system. The position of the signal peptide cleavage has been experimentally proven.

It carries out the reaction a beta-lactam + H2O = a substituted beta-amino acid. This is Beta-lactamase from Streptomyces albus G.